Consider the following 348-residue polypeptide: MPVEALYWKDGRLYVLDQTRLPEETVYVTCSSYRDAAEAIKTMRVRGAPAIGAVGAFGLVLGALETGGDRESFLARLREIAGVLRDTRPTAVNLDWALERMLARAVETLGEPGALRAALLAEAQAIVREDIEANRRMGLFGRELIPDPARILTHCNAGALATAGYGTALGVIRAAREAGKQVKVFAGETRPFLQGARLTAWELMREGIEVVLVADNMAGYLMAREGLDLVIVGADRVAANGDVANKIGTYSLAVLARAHGIPFYVAVPLSTVDLRTAIGRDIPIEERDPAELTHFRGRRVAPQGVAVWNPAFDVTPNELITALITDAGVLKPPFGEALRRAVGSGRRE.

Residues 46–48 (RGA), Arg88, and Gln194 each bind substrate. The active-site Proton donor is Asp235. 245-246 (NK) is a binding site for substrate.

Belongs to the eIF-2B alpha/beta/delta subunits family. MtnA subfamily.

The enzyme catalyses 5-(methylsulfanyl)-alpha-D-ribose 1-phosphate = 5-(methylsulfanyl)-D-ribulose 1-phosphate. The protein operates within amino-acid biosynthesis; L-methionine biosynthesis via salvage pathway; L-methionine from S-methyl-5-thio-alpha-D-ribose 1-phosphate: step 1/6. Catalyzes the interconversion of methylthioribose-1-phosphate (MTR-1-P) into methylthioribulose-1-phosphate (MTRu-1-P). This chain is Methylthioribose-1-phosphate isomerase, found in Desulforudis audaxviator (strain MP104C).